The following is a 338-amino-acid chain: UPF0104 membrane protein MTH_1261 (338 aa).

Transmembrane regions (helical) follow at residues 6–26, 36–56, 124–144, 149–169, 231–251, 254–274, 275–295, and 310–330; these read AILI…IGPG, DPVY…LFTL, LDTF…VLYF, WILA…FLAL, ISFL…TAFG, ISLL…MIPL, LPGG…YAGV, and ISFW…GSSV.

This sequence belongs to the UPF0104 family.

It localises to the cell membrane. This Methanothermobacter thermautotrophicus (strain ATCC 29096 / DSM 1053 / JCM 10044 / NBRC 100330 / Delta H) (Methanobacterium thermoautotrophicum) protein is UPF0104 membrane protein MTH_1261.